We begin with the raw amino-acid sequence, 43 residues long: Structural protein ORF5a (43 aa).

Residues 2-22 (FSQIGAFLDSALLLLVAFFAV) traverse the membrane as a helical segment.

It belongs to the arteriviridae ORF5a protein family. As to quaternary structure, interacts with proteins GP2B and GP4.

It localises to the virion. It is found in the host cell membrane. Minor virion component that plays an essential role in virus infectivity. This Sus scrofa (Pig) protein is Structural protein ORF5a.